We begin with the raw amino-acid sequence, 458 residues long: UDP-N-acetylmuramoylalanine--D-glutamate ligase (458 aa).

118–124 is an ATP binding site; sequence GTNGKTT.

This sequence belongs to the MurCDEF family.

Its subcellular location is the cytoplasm. It catalyses the reaction UDP-N-acetyl-alpha-D-muramoyl-L-alanine + D-glutamate + ATP = UDP-N-acetyl-alpha-D-muramoyl-L-alanyl-D-glutamate + ADP + phosphate + H(+). It functions in the pathway cell wall biogenesis; peptidoglycan biosynthesis. Functionally, cell wall formation. Catalyzes the addition of glutamate to the nucleotide precursor UDP-N-acetylmuramoyl-L-alanine (UMA). The chain is UDP-N-acetylmuramoylalanine--D-glutamate ligase from Ligilactobacillus salivarius (strain UCC118) (Lactobacillus salivarius).